Here is a 223-residue protein sequence, read N- to C-terminus: Protein-disulfide oxidoreductase DsbI (223 aa).

The helical transmembrane segment at 26–46 (LLWLLMAVAMGALIILAHSFF) threads the bilayer. A disulfide bridge links Cys-55 with Cys-58. The next 2 membrane-spanning stretches (helical) occupy residues 59–78 (VYIR…AAIN) and 82–102 (IILK…GLKF). Cys-127 and Cys-153 are disulfide-bonded. A helical transmembrane segment spans residues 198-218 (CMLAFGMCLVLLVIMSGAWAL).

It belongs to the DsbB family. DsbI subfamily. As to quaternary structure, interacts with DsbL.

The protein resides in the cell inner membrane. Its function is as follows. Required for disulfide bond formation in some proteins. Part of a redox system composed of DsbI and DsbL that mediates formation of an essential disulfide bond in AssT. The sequence is that of Protein-disulfide oxidoreductase DsbI from Escherichia coli O1:K1 / APEC.